The following is a 122-amino-acid chain: Large ribosomal subunit protein uL14c (122 aa).

The protein belongs to the universal ribosomal protein uL14 family. As to quaternary structure, part of the 50S ribosomal subunit.

Its subcellular location is the plastid. The protein resides in the chloroplast. Binds to 23S rRNA. The chain is Large ribosomal subunit protein uL14c from Angiopteris evecta (Mule's foot fern).